A 413-amino-acid chain; its full sequence is Serine hydroxymethyltransferase (413 aa).

(6S)-5,6,7,8-tetrahydrofolate is bound by residues L117 and 121–123 (GHL). N6-(pyridoxal phosphate)lysine is present on K226. Residues E239 and 349–351 (SPF) each bind (6S)-5,6,7,8-tetrahydrofolate.

Belongs to the SHMT family. Homodimer. Requires pyridoxal 5'-phosphate as cofactor.

The protein localises to the cytoplasm. It carries out the reaction (6R)-5,10-methylene-5,6,7,8-tetrahydrofolate + glycine + H2O = (6S)-5,6,7,8-tetrahydrofolate + L-serine. The protein operates within one-carbon metabolism; tetrahydrofolate interconversion. It participates in amino-acid biosynthesis; glycine biosynthesis; glycine from L-serine: step 1/1. Functionally, catalyzes the reversible interconversion of serine and glycine with tetrahydrofolate (THF) serving as the one-carbon carrier. This reaction serves as the major source of one-carbon groups required for the biosynthesis of purines, thymidylate, methionine, and other important biomolecules. Also exhibits THF-independent aldolase activity toward beta-hydroxyamino acids, producing glycine and aldehydes, via a retro-aldol mechanism. The chain is Serine hydroxymethyltransferase from Bacillus cereus (strain ATCC 10987 / NRS 248).